A 549-amino-acid polypeptide reads, in one-letter code: Guanine nucleotide-binding protein-like 3 (549 aa).

The segment covering 1–45 (MKRPKLKKASKRMTCHKRYKIQKKVREHHRKLRKEAKKRGHKKPR) has biased composition (basic residues). Disordered regions lie at residues 1–56 (MKRP…SAPF) and 73–104 (ELKQ…SNVE). Residues 2-46 (KRPKLKKASKRMTCHKRYKIQKKVREHHRKLRKEAKKRGHKKPRK) are basic. Positions 56–95 (FKEALLREAELRKQRLEELKQQQKLDRQKELEKKRKLETN) form a coiled coil. Over residues 73–96 (ELKQQQKLDRQKELEKKRKLETNP) the composition is skewed to basic and acidic residues. An N6-acetyllysine modification is found at Lys-79. Glycyl lysine isopeptide (Lys-Gly) (interchain with G-Cter in SUMO2) cross-links involve residues Lys-91 and Lys-99. Residue Ser-101 is modified to Phosphoserine. Glycyl lysine isopeptide (Lys-Gly) (interchain with G-Cter in SUMO2) cross-links involve residues Lys-114, Lys-179, Lys-196, Lys-253, Lys-267, and Lys-275. The CP-type G domain occupies 131–312 (CQELKKVIEA…IIDSPSFIVS (182 aa)). A GTP-binding site is contributed by 178 to 181 (NKSD). A GTP-binding site is contributed by 261–268 (GFPNVGKS). Positions 282-456 (VGVSMGLTRS…HLANSILFQS (175 aa)) are intermediate. Position 305–308 (305–308 (DSPS)) interacts with GTP. Residues 465-543 (EEKDIHEELP…KIIEEDDAYD (79 aa)) are acidic. Basic and acidic residues predominate over residues 474–483 (PKRKERKQEE). The interval 474–532 (PKRKERKQEEREDDKDSDQETVDEEVDENSSGMFAAEETGEALSEETTAGEQSTRSFIL) is disordered. A compositionally biased stretch (acidic residues) spans 484-501 (REDDKDSDQETVDEEVDE). Phosphoserine occurs at positions 490, 504, 517, and 529. A compositionally biased stretch (polar residues) spans 518-529 (EETTAGEQSTRS).

The protein belongs to the TRAFAC class YlqF/YawG GTPase family. Interacts with MDM2; this interaction stabilizes MDM2. Interaction with MDM2 occurs in the nucleoplasm and is triggered by a nucleolar release mechanism, such as mitosis-induced nucleolar disassembly. Indirectly interacts with TP53, via MDM2-binding. Interacts with TSC22D1 isoform 2. Increased levels in lung tissue in cancer patients.

It is found in the nucleus. The protein resides in the nucleolus. May be required to maintain the proliferative capacity of stem cells. Stabilizes MDM2 by preventing its ubiquitination, and hence proteasomal degradation. The protein is Guanine nucleotide-binding protein-like 3 (GNL3) of Homo sapiens (Human).